The sequence spans 511 residues: DELLA protein RGL1 (511 aa).

Residues 1-11 (MKREHNHRESS) are compositionally biased toward basic and acidic residues. The disordered stretch occupies residues 1 to 20 (MKREHNHRESSAGEGGSSSM). The short motif at 32-36 (DELLV) is the DELLA motif element. Residues 54–58 (LEQLE) carry the LEXLE motif motif. The VHYNP motif signature appears at 73 to 77 (VHYNP). The region spanning 143-506 (LDSQETGVRL…RPLIATSAWR (364 aa)) is the GRAS domain. Residues 150 to 204 (VRLVHALLACAEAVQQNNLKLADALVKHVGLLASSQAGAMRKVATYFAEGLARRI) are leucine repeat I (LRI). The LxCxE motif motif lies at 157-161 (LACAE). Positions 223 to 288 (QIHFYESCPY…NGPPDFRLTG (66 aa)) are VHIID. The VHIID signature appears at 254–258 (VHVID). Residues 298 to 330 (EVGWKLGQLASTIGVNFEFKSIALNNLSDLKPE) form a leucine repeat II (LRII) region. Positions 341 to 427 (VAVNSVFELH…ELFLGRQILN (87 aa)) are PFYRE. The LXXLL motif signature appears at 349–353 (LHRLL). Residues 430–506 (ACEGEDRVER…RPLIATSAWR (77 aa)) form an SAW region.

This sequence belongs to the GRAS family. DELLA subfamily. Interacts directly with the GID2/SLY1 component of the SCF(GID2) complex. Interacts (via N-terminus) with GID1A, GID1B and GID1B (via N-terminus). Interacts with the BOI proteins BOI, BRG1, BRG2 and BRG3. Binds to and coactivates GAF1/IDD2 and ENY/IDD1. In terms of processing, phosphorylated. Post-translationally, may be ubiquitinated, as suggested by its interaction with GID2. Ubiquitination is however unsure since in contrast to other DELLA proteins, it is not ubiquitinated and degraded upon GA application. Nevertheless, ubiquitination may be triggered by other processes. As to expression, predominantly expressed in germinating seeds and flowers and siliques. Highly expressed in inflorescences and weakly or not expressed in rosette leaves, etiolated seedlings, siliques, mature stems and roots. RGA and GAI transcripts were detected at slightly varying levels in all tissues examined. RGL2 signal was undetected, and RGL3 signal was very weak in all tissues examined (rosette leaves, seedlings, inflorescences, and siliques) except inflorescences. In the flower, it is expressed in developing ovules as well as in developing anthers throughout microspore development.

The protein localises to the nucleus. In terms of biological role, probable transcriptional regulator that acts as a repressor of the gibberellin (GA) signaling pathway. No effect of the BOI proteins on its stability. Probably acts by participating in large multiprotein complexes that repress transcription of GA-inducible genes. Has overlapping but distinct roles in GA signaling compared to RGA and GAI. Regulates the floral development. May also participate in seed germination and in ovule and anther development. Its activity is probably regulated by other phytohormones such as auxin and ethylene. The sequence is that of DELLA protein RGL1 (RGL1) from Arabidopsis thaliana (Mouse-ear cress).